The sequence spans 303 residues: Tyrosine recombinase XerC (303 aa).

A Core-binding (CB) domain is found at 1–85 (MRADLDAFLE…ATRGLYQYLL (85 aa)). The region spanning 106-285 (KLPRTLDADR…DFQHLASVYD (180 aa)) is the Tyr recombinase domain. Residues Arg-146, Lys-170, His-237, Arg-240, and His-263 contribute to the active site. The active-site O-(3'-phospho-DNA)-tyrosine intermediate is the Tyr-272.

The protein belongs to the 'phage' integrase family. XerC subfamily. As to quaternary structure, forms a cyclic heterotetrameric complex composed of two molecules of XerC and two molecules of XerD.

It localises to the cytoplasm. Site-specific tyrosine recombinase, which acts by catalyzing the cutting and rejoining of the recombining DNA molecules. The XerC-XerD complex is essential to convert dimers of the bacterial chromosome into monomers to permit their segregation at cell division. It also contributes to the segregational stability of plasmids. The protein is Tyrosine recombinase XerC of Pseudomonas aeruginosa (strain LESB58).